The chain runs to 34 residues: Cytochrome b6-f complex subunit 8 (34 aa).

The chain crosses the membrane as a helical span at residues 3 to 23 (IFQIGWAALAAIFTFSIAMVV).

Belongs to the PetN family. As to quaternary structure, the 4 large subunits of the cytochrome b6-f complex are cytochrome b6, subunit IV (17 kDa polypeptide, PetD), cytochrome f and the Rieske protein, while the 4 small subunits are PetG, PetL, PetM and PetN. The complex functions as a dimer.

It is found in the cellular thylakoid membrane. Functionally, component of the cytochrome b6-f complex, which mediates electron transfer between photosystem II (PSII) and photosystem I (PSI), cyclic electron flow around PSI, and state transitions. This Prochlorococcus marinus subsp. pastoris (strain CCMP1986 / NIES-2087 / MED4) protein is Cytochrome b6-f complex subunit 8.